The sequence spans 520 residues: MARARRTKRDSATNIYRTCKQAGTCPPDVINKVEQTTIADKILQYGSAGVFFGGLGISTGKGTGGATGYVPLGEGPVRVGGTATVIRPSLVPDTIGPSDIIPVDTLNPVEPTTSSIVPLTEASGSDLLPGEVETIAEVHPTPSIPSTDTPVTTTSSGASAVLEVAPEPVPPSRVRVTRTQYHNPSFQILTESTPTQGESSLADHILVTSGSGGQTIGSSGSDLIELQEFPTRYSFEIEEPTPPRQSSTPIQRLRTAFRRRGGLTNRRLVQQVAVDDPIFLTQPSRLVSFQFDNPAFEEEVTQIFEQDLDNFREPPNRDFLDVQTLGRPQYSETPSGYIRVSRLGQRRTIRTRSGAQIGSQVHFYRDLSTIDSEDPIELQLLGQHSGDASIVQGNTESTFININIDENPLAEDYSITANSEDLLLDEAQEDFSGSQLVVGGRRSTSTYTVPQFETTRSGSYYTQDTKGYYVAYPEDRSTSKDIIYPMPDLPVVIIHTYDTSGDFYLHPSLRKRFKRKRKYL.

Positions 1–10 match the Nuclear localization signal motif; it reads MARARRTKRD. Cysteines 19 and 25 form a disulfide. The Nuclear localization signal signature appears at 511–519; it reads KRFKRKRKY.

The protein belongs to the papillomaviridae L2 protein family. As to quaternary structure, interacts with major capsid protein L1. Interacts with E2; this interaction inhibits E2 transcriptional activity but not the DNA replication function E2. Interacts with host GADD45GIP1. Interacts with host HSPA8; this interaction is required for L2 nuclear translocation. Interacts with host importins KPNB2 and KPNB3. Forms a complex with importin alpha2-beta1 heterodimers via interaction with the importin alpha2 adapter. Interacts with host DYNLT1; this interaction is essential for virus intracellular transport during entry. Interacts (via C-terminus) with host retromer subunits VPS35 and VPS29. Post-translationally, highly phosphorylated.

It is found in the virion. The protein resides in the host nucleus. It localises to the host early endosome. Its subcellular location is the host Golgi apparatus. Functionally, minor protein of the capsid that localizes along the inner surface of the virion, within the central cavities beneath the L1 pentamers. Plays a role in capsid stabilization through interaction with the major capsid protein L1. Once the virion enters the host cell, L2 escorts the genomic DNA into the nucleus by promoting escape from the endosomal compartments and traffic through the host Golgi network. Mechanistically, the C-terminus of L2 possesses a cell-penetrating peptide that protudes from the host endosome, interacts with host cytoplasmic retromer cargo and thereby mediates the capsid delivery to the host trans-Golgi network. Plays a role through its interaction with host dynein in the intracellular microtubule-dependent transport of viral capsid toward the nucleus. Mediates the viral genome import into the nucleus through binding to host importins. Once within the nucleus, L2 localizes viral genomes to host PML bodies in order to activate early gene expression for establishment of infection. Later on, promotes late gene expression by interacting with the viral E2 protein and by inhibiting its transcriptional activation functions. During virion assembly, encapsidates the genome by direct interaction with the viral DNA. In Homo sapiens (Human), this protein is Minor capsid protein L2.